The following is a 29-amino-acid chain: Cytochrome b6-f complex subunit 8 (29 aa).

Residues 3 to 23 (MVSLAWAALMVVFTFSLSLVV) traverse the membrane as a helical segment.

This sequence belongs to the PetN family. In terms of assembly, the 4 large subunits of the cytochrome b6-f complex are cytochrome b6, subunit IV (17 kDa polypeptide, PetD), cytochrome f and the Rieske protein, while the 4 small subunits are PetG, PetL, PetM and PetN. The complex functions as a dimer.

Its subcellular location is the plastid. The protein localises to the chloroplast thylakoid membrane. Functionally, component of the cytochrome b6-f complex, which mediates electron transfer between photosystem II (PSII) and photosystem I (PSI), cyclic electron flow around PSI, and state transitions. This is Cytochrome b6-f complex subunit 8 from Cucumis sativus (Cucumber).